The chain runs to 511 residues: Piperic acid synthase CYP719A37 (511 aa).

The helical transmembrane segment at 7–27 (VDPALFSAFVSIIFFFLGMFL) threads the bilayer. Position 455 (cysteine 455) interacts with heme.

Belongs to the cytochrome P450 family. It depends on heme as a cofactor. As to expression, specifically expressed in immature fruits and roots. Barely detectable in young leaves and flowering spadices.

The protein localises to the membrane. The protein resides in the endoplasmic reticulum membrane. The catalysed reaction is (E,E)-feruperate + reduced [NADPH--hemoprotein reductase] + O2 = (E,E)-piperate + oxidized [NADPH--hemoprotein reductase] + 2 H2O + H(+). The protein operates within aromatic compound metabolism. Its function is as follows. Cytochrome P450 monooxygenase involved in the biosynthesis of aromatic piperamides natural products such as piperine (1-piperoyl-piperidine), the pungent principle contributing, together with several terpenoids, to the aromatic properties of black pepper fruits, and displaying numerous pharmacological activities such as antiproliferative, antitumor, antiangiogenesis, antioxidant, antidiabetic, antiobesity, cardioprotective, antimicrobial, antiaging, and immunomodulatory effects. Catalyzes the conversion of feruperic acid (5-(4-hydroxy-3-methoxyphenyl)-2,4-pentadienoic acid) to piperic acid. Inactive toward ferulic acid and feruperine. The protein is Piperic acid synthase CYP719A37 of Piper nigrum (Black pepper).